The primary structure comprises 188 residues: MMSLWIAIGALSTLALVSGVVLGFAARRFQVDEDPVVEQVDAILPQSQCGQCGYPGCRPYAEAVSTGGEKINKCAPGGEQVMLKLAELLAVEPQPLDGDESAAHPQRKVAFIDEANCIGCTKCIQACPVDAIIGATRAMHTVLSDLCTGCDLCVAPCPTDCIEMIPVATTTANWKWDLNTIPVKNLPN.

A hydrophobic region spans residues 1–26 (MMSLWIAIGALSTLALVSGVVLGFAA). A 4Fe-4S domain is found at 32–91 (DEDPVVEQVDAILPQSQCGQCGYPGCRPYAEAVSTGGEKINKCAPGGEQVMLKLAELLAV). [4Fe-4S] cluster is bound by residues Cys-49, Cys-52, Cys-57, Cys-74, Cys-117, Cys-120, Cys-123, Cys-127, Cys-147, Cys-150, Cys-153, and Cys-157. 4Fe-4S ferredoxin-type domains follow at residues 108–137 (KVAF…GATR) and 138–167 (AMHT…MIPV).

The protein belongs to the 4Fe4S bacterial-type ferredoxin family. RnfB subfamily. As to quaternary structure, the complex is composed of six subunits: RnfA, RnfB, RnfC, RnfD, RnfE and RnfG. Requires [4Fe-4S] cluster as cofactor.

Its subcellular location is the cell inner membrane. Functionally, part of a membrane-bound complex that couples electron transfer with translocation of ions across the membrane. The polypeptide is Ion-translocating oxidoreductase complex subunit B (Yersinia pestis bv. Antiqua (strain Antiqua)).